The following is a 279-amino-acid chain: uncharacterized protein (279 aa).

The protein belongs to the PhzF family.

This is an uncharacterized protein from Vibrio cholerae serotype O1 (strain ATCC 39315 / El Tor Inaba N16961).